We begin with the raw amino-acid sequence, 331 residues long: L-lactate dehydrogenase A chain (331 aa).

NAD(+) contacts are provided by residues 29–57 (GMVG…MEDK) and R98. Substrate is bound by residues R105, N137, and R168. N137 contacts NAD(+). The active-site Proton acceptor is H192. T247 contacts substrate.

It belongs to the LDH/MDH superfamily. LDH family. Homotetramer.

Its subcellular location is the cytoplasm. It catalyses the reaction (S)-lactate + NAD(+) = pyruvate + NADH + H(+). It functions in the pathway fermentation; pyruvate fermentation to lactate; (S)-lactate from pyruvate: step 1/1. Functionally, interconverts simultaneously and stereospecifically pyruvate and lactate with concomitant interconversion of NADH and NAD(+). The chain is L-lactate dehydrogenase A chain (ldha) from Gobionotothen gibberifrons (Humped rockcod).